The sequence spans 353 residues: Peroxidase 34 (353 aa).

An N-terminal signal peptide occupies residues 1–30; it reads MHFSSSSTSSTWTILITLGCLMLHASLSAA. The residue at position 31 (glutamine 31) is a Pyrrolidone carboxylic acid. 4 disulfide bridges follow: cysteine 41–cysteine 121, cysteine 74–cysteine 79, cysteine 127–cysteine 331, and cysteine 207–cysteine 239. N-linked (GlcNAc...) asparagine glycosylation occurs at asparagine 43. Histidine 72 (proton acceptor) is an active-site residue. 5 residues coordinate Ca(2+): aspartate 73, valine 76, glycine 78, aspartate 80, and serine 82. A glycan (N-linked (GlcNAc...) asparagine) is linked at asparagine 87. Proline 169 lines the substrate pocket. Heme b is bound at residue histidine 200. Threonine 201 is a binding site for Ca(2+). Residues asparagine 216, asparagine 228, and asparagine 244 are each glycosylated (N-linked (GlcNAc...) asparagine). Ca(2+) contacts are provided by aspartate 252, threonine 255, and aspartate 260. N-linked (GlcNAc...) asparagine glycosylation occurs at asparagine 285.

The protein belongs to the peroxidase family. Classical plant (class III) peroxidase subfamily. The cofactor is heme b. Requires Ca(2+) as cofactor. Preferentially expressed in roots, but also detected in flowers, leaves and stems.

The protein resides in the secreted. It is found in the vacuole. It catalyses the reaction 2 a phenolic donor + H2O2 = 2 a phenolic radical donor + 2 H2O. Functionally, removal of H(2)O(2), oxidation of toxic reductants, biosynthesis and degradation of lignin, suberization, auxin catabolism, response to environmental stresses such as wounding, pathogen attack and oxidative stress. These functions might be dependent on each isozyme/isoform in each plant tissue. May be implicated in the systemic acquired resistance response via the salicylic acid signal transduction pathway. Exhibits a Ca(2+)-pectate binding affinity which could be interpreted in vivo as a specificity to interact with the pectic structure of the cell wall. In Arabidopsis thaliana (Mouse-ear cress), this protein is Peroxidase 34 (PER34).